A 142-amino-acid polypeptide reads, in one-letter code: Hemoglobin subunit alpha (142 aa).

The Globin domain occupies 2-142; that stretch reads VLSSQNKKAI…VAYELSSCYR (141 aa). His-60 is a binding site for O2. His-89 is a binding site for heme b.

Belongs to the globin family. In terms of assembly, heterotetramer of two alpha chains and two beta chains. Red blood cells.

Functionally, involved in oxygen transport from gills to the various peripheral tissues. The sequence is that of Hemoglobin subunit alpha (hba) from Hemitrygon akajei (Red stingray).